We begin with the raw amino-acid sequence, 127 residues long: Fluoride-specific ion channel FluC (127 aa).

A run of 4 helical transmembrane segments spans residues 4-24, 35-55, 68-88, and 96-116; these read SLLA…GLGM, PGTL…IAFF, LLIT…AEVV, and ILWA…MTAA. Residues glycine 75 and threonine 78 each contribute to the Na(+) site.

It belongs to the fluoride channel Fluc/FEX (TC 1.A.43) family.

It localises to the cell inner membrane. It catalyses the reaction fluoride(in) = fluoride(out). Its activity is regulated as follows. Na(+) is not transported, but it plays an essential structural role and its presence is essential for fluoride channel function. Functionally, fluoride-specific ion channel. Important for reducing fluoride concentration in the cell, thus reducing its toxicity. In Pseudomonas putida (strain W619), this protein is Fluoride-specific ion channel FluC.